A 294-amino-acid chain; its full sequence is GTPase Era (294 aa).

The 170-residue stretch at 2-171 (NSGVVTIIGR…LSLLIELLPE (170 aa)) folds into the Era-type G domain. The interval 10–17 (GRPSAGKS) is G1. 10–17 (GRPSAGKS) lines the GTP pocket. The interval 36 to 40 (QTTRN) is G2. The G3 stretch occupies residues 57–60 (DTPG). GTP contacts are provided by residues 57 to 61 (DTPGY) and 119 to 122 (NKAD). A G4 region spans residues 119-122 (NKAD). Residues 150–152 (ISA) form a G5 region. One can recognise a KH type-2 domain in the interval 202–280 (TREEIPHALY…QLDLQVRVNK (79 aa)).

The protein belongs to the TRAFAC class TrmE-Era-EngA-EngB-Septin-like GTPase superfamily. Era GTPase family. In terms of assembly, monomer.

It localises to the cytoplasm. The protein resides in the cell inner membrane. In terms of biological role, an essential GTPase that binds both GDP and GTP, with rapid nucleotide exchange. Plays a role in 16S rRNA processing and 30S ribosomal subunit biogenesis and possibly also in cell cycle regulation and energy metabolism. This chain is GTPase Era, found in Treponema denticola (strain ATCC 35405 / DSM 14222 / CIP 103919 / JCM 8153 / KCTC 15104).